The primary structure comprises 373 residues: Dual-specificity RNA methyltransferase RlmN (373 aa).

Glutamate 94 functions as the Proton acceptor in the catalytic mechanism. The Radical SAM core domain occupies 100-339 (EDDRATLCVS…VIVRKTRGDD (240 aa)). Cysteines 107 and 344 form a disulfide. Positions 114, 118, and 121 each coordinate [4Fe-4S] cluster. S-adenosyl-L-methionine-binding positions include 168-169 (GE), serine 200, 222-224 (SIH), and asparagine 301. Cysteine 344 (S-methylcysteine intermediate) is an active-site residue.

The protein belongs to the radical SAM superfamily. RlmN family. [4Fe-4S] cluster serves as cofactor.

It localises to the cytoplasm. It catalyses the reaction adenosine(2503) in 23S rRNA + 2 reduced [2Fe-2S]-[ferredoxin] + 2 S-adenosyl-L-methionine = 2-methyladenosine(2503) in 23S rRNA + 5'-deoxyadenosine + L-methionine + 2 oxidized [2Fe-2S]-[ferredoxin] + S-adenosyl-L-homocysteine. It carries out the reaction adenosine(37) in tRNA + 2 reduced [2Fe-2S]-[ferredoxin] + 2 S-adenosyl-L-methionine = 2-methyladenosine(37) in tRNA + 5'-deoxyadenosine + L-methionine + 2 oxidized [2Fe-2S]-[ferredoxin] + S-adenosyl-L-homocysteine. Its function is as follows. Specifically methylates position 2 of adenine 2503 in 23S rRNA and position 2 of adenine 37 in tRNAs. m2A2503 modification seems to play a crucial role in the proofreading step occurring at the peptidyl transferase center and thus would serve to optimize ribosomal fidelity. The protein is Dual-specificity RNA methyltransferase RlmN of Shewanella oneidensis (strain ATCC 700550 / JCM 31522 / CIP 106686 / LMG 19005 / NCIMB 14063 / MR-1).